The following is a 321-amino-acid chain: Glucokinase (321 aa).

8–13 (GDVGGT) serves as a coordination point for ATP.

This sequence belongs to the bacterial glucokinase family.

The protein localises to the cytoplasm. The enzyme catalyses D-glucose + ATP = D-glucose 6-phosphate + ADP + H(+). The polypeptide is Glucokinase (Salmonella paratyphi B (strain ATCC BAA-1250 / SPB7)).